We begin with the raw amino-acid sequence, 164 residues long: Aspartate carbamoyltransferase regulatory chain (164 aa).

Residues cysteine 116, cysteine 121, cysteine 146, and cysteine 149 each coordinate Zn(2+).

This sequence belongs to the PyrI family. In terms of assembly, contains catalytic and regulatory chains. Requires Zn(2+) as cofactor.

Involved in allosteric regulation of aspartate carbamoyltransferase. The protein is Aspartate carbamoyltransferase regulatory chain of Staphylothermus marinus (strain ATCC 43588 / DSM 3639 / JCM 9404 / F1).